A 438-amino-acid chain; its full sequence is Putative F-box protein At5g15660 (438 aa).

The disordered stretch occupies residues Met-1–Lys-24. One can recognise an F-box domain in the interval Arg-22–Tyr-68.

The polypeptide is Putative F-box protein At5g15660 (Arabidopsis thaliana (Mouse-ear cress)).